Reading from the N-terminus, the 313-residue chain is Olfactory receptor 1J1 (313 aa).

Topologically, residues 1–25 are extracellular; it reads MRLKNHSSVSEFLLLGFPIRPEQGG. A glycan (N-linked (GlcNAc...) asparagine) is linked at N5. Residues 26 to 46 traverse the membrane as a helical segment; that stretch reads IFFSLFLAMYLITVLGNLLII. The Cytoplasmic portion of the chain corresponds to 47–57; that stretch reads LLIRLDSHLHT. Residues 58-78 traverse the membrane as a helical segment; that stretch reads PMYFFLSHLAFTDISFSSVTV. Residues 79 to 97 are Extracellular-facing; the sequence is PKMLTKVQNQPIPITYEEC. The cysteines at positions 97 and 189 are disulfide-linked. A helical membrane pass occupies residues 98 to 118; the sequence is VSQTYFFIFFADLDSFLITSM. The Cytoplasmic segment spans residues 119–142; it reads AYDRYMAICHPLHYITIMSQSRCA. The chain crosses the membrane as a helical span at residues 143–163; it reads MLVAVSWVIASACALLHSLLL. The Extracellular segment spans residues 164 to 196; the sequence is DQLSFCADHTVPHFFCDLGALLKLSCSDTSLNQ. The helical transmembrane segment at 197-217 threads the bilayer; that stretch reads LVIFTAGLAAIMLPFLCILIS. Residues 218 to 240 lie on the Cytoplasmic side of the membrane; that stretch reads YGRIGFTILQVPTTKGICKALST. The chain crosses the membrane as a helical span at residues 241-261; the sequence is CGSHLSVVALYYGSIIGLYFL. Over 262 to 271 the chain is Extracellular; sequence PPSNSKINNN. A helical transmembrane segment spans residues 272–292; it reads IVASVMYTVVTPMLNPFIYSL. The Cytoplasmic segment spans residues 293–313; sequence RNKDMKGALKKLLSKKTEFSK.

Belongs to the G-protein coupled receptor 1 family.

Its subcellular location is the cell membrane. Functionally, odorant receptor. This chain is Olfactory receptor 1J1, found in Mus musculus (Mouse).